A 231-amino-acid chain; its full sequence is MINKTYESIASAVEGITDGSTIMVGGFGTAGMPSELIDGLIATGARDLTIISNNAGNGEIGLAALLMAGSVRKVVCSFPRQSDSYVFDELYRAGKIELEVVPQGNLAERIAAAGSGIGAFFSPTGYGTLLAEGKETREIDGRMYVLEMPLHADFALIKAHKGDRWGNLTYRKAARNFGPIMAMAAKTAIAQVDQVVELGELDPEHIITPGIFVQRVVAVSGAAASSIAKAI.

A CoA-binding site is contributed by 25–31 (GGFGTAG).

Belongs to the 3-oxoacid CoA-transferase subunit A family. Heterodimer.

It carries out the reaction 3-oxoadipate + succinyl-CoA = 3-oxoadipyl-CoA + succinate. It functions in the pathway aromatic compound metabolism; beta-ketoadipate pathway; acetyl-CoA and succinyl-CoA from 3-oxoadipate: step 1/2. This chain is 3-oxoadipate CoA-transferase subunit A (pcaI), found in Pseudomonas putida (Arthrobacter siderocapsulatus).